Reading from the N-terminus, the 233-residue chain is Leucyl/phenylalanyl-tRNA--protein transferase (233 aa).

This sequence belongs to the L/F-transferase family.

It is found in the cytoplasm. The enzyme catalyses N-terminal L-lysyl-[protein] + L-leucyl-tRNA(Leu) = N-terminal L-leucyl-L-lysyl-[protein] + tRNA(Leu) + H(+). The catalysed reaction is N-terminal L-arginyl-[protein] + L-leucyl-tRNA(Leu) = N-terminal L-leucyl-L-arginyl-[protein] + tRNA(Leu) + H(+). It carries out the reaction L-phenylalanyl-tRNA(Phe) + an N-terminal L-alpha-aminoacyl-[protein] = an N-terminal L-phenylalanyl-L-alpha-aminoacyl-[protein] + tRNA(Phe). Functionally, functions in the N-end rule pathway of protein degradation where it conjugates Leu, Phe and, less efficiently, Met from aminoacyl-tRNAs to the N-termini of proteins containing an N-terminal arginine or lysine. This chain is Leucyl/phenylalanyl-tRNA--protein transferase, found in Anaeromyxobacter dehalogenans (strain 2CP-C).